Here is a 195-residue protein sequence, read N- to C-terminus: UPF0301 protein CCNA_03506 (195 aa).

This sequence belongs to the UPF0301 (AlgH) family.

In Caulobacter vibrioides (strain NA1000 / CB15N) (Caulobacter crescentus), this protein is UPF0301 protein CCNA_03506.